Reading from the N-terminus, the 161-residue chain is SsrA-binding protein (161 aa).

The interval 138–161 (DKRTDSKEKDWNRDKARIMKSSLR) is disordered. Basic and acidic residues predominate over residues 139–154 (KRTDSKEKDWNRDKAR).

It belongs to the SmpB family.

The protein resides in the cytoplasm. In terms of biological role, required for rescue of stalled ribosomes mediated by trans-translation. Binds to transfer-messenger RNA (tmRNA), required for stable association of tmRNA with ribosomes. tmRNA and SmpB together mimic tRNA shape, replacing the anticodon stem-loop with SmpB. tmRNA is encoded by the ssrA gene; the 2 termini fold to resemble tRNA(Ala) and it encodes a 'tag peptide', a short internal open reading frame. During trans-translation Ala-aminoacylated tmRNA acts like a tRNA, entering the A-site of stalled ribosomes, displacing the stalled mRNA. The ribosome then switches to translate the ORF on the tmRNA; the nascent peptide is terminated with the 'tag peptide' encoded by the tmRNA and targeted for degradation. The ribosome is freed to recommence translation, which seems to be the essential function of trans-translation. This is SsrA-binding protein from Aliivibrio fischeri (strain MJ11) (Vibrio fischeri).